We begin with the raw amino-acid sequence, 949 residues long: Glycine dehydrogenase (decarboxylating) (949 aa).

K697 is subject to N6-(pyridoxal phosphate)lysine.

It belongs to the GcvP family. In terms of assembly, the glycine cleavage system is composed of four proteins: P, T, L and H. Pyridoxal 5'-phosphate serves as cofactor.

It carries out the reaction N(6)-[(R)-lipoyl]-L-lysyl-[glycine-cleavage complex H protein] + glycine + H(+) = N(6)-[(R)-S(8)-aminomethyldihydrolipoyl]-L-lysyl-[glycine-cleavage complex H protein] + CO2. Functionally, the glycine cleavage system catalyzes the degradation of glycine. The P protein binds the alpha-amino group of glycine through its pyridoxal phosphate cofactor; CO(2) is released and the remaining methylamine moiety is then transferred to the lipoamide cofactor of the H protein. The chain is Glycine dehydrogenase (decarboxylating) from Deinococcus radiodurans (strain ATCC 13939 / DSM 20539 / JCM 16871 / CCUG 27074 / LMG 4051 / NBRC 15346 / NCIMB 9279 / VKM B-1422 / R1).